A 138-amino-acid chain; its full sequence is Large ribosomal subunit protein uL16 (138 aa).

The segment covering 1-13 (MLQPARRKYRKEQ) has biased composition (basic residues). Residues 1-22 (MLQPARRKYRKEQKGRNTGVAT) form a disordered region.

This sequence belongs to the universal ribosomal protein uL16 family. As to quaternary structure, part of the 50S ribosomal subunit.

In terms of biological role, binds 23S rRNA and is also seen to make contacts with the A and possibly P site tRNAs. The protein is Large ribosomal subunit protein uL16 of Paracidovorax citrulli (strain AAC00-1) (Acidovorax citrulli).